We begin with the raw amino-acid sequence, 428 residues long: MLDIKLFREQADTVKSKIELRGDDPKVVDEVLELDNERRQLIGKTEEMKARRNKVSEEIAEKKRNKENADDVIKEMRELGDEIKENDAKLNEVDNKVRDILIRIPNLIAEDVPQGDSDEENVEVKKWGTPREFDFEPKAHWDLVEELKMADFERAAKISGARFVYLTKDGALLERALMNYMLTKHTTQHGYTEMMTPQLVNADTMFGTGQLPKFEEDLFKVEKEGLYTIPTAEVPLTNFYRDEIIQPGVLPEKFTAQTACFRSEAGSAGRDTRGLIRLHQFDKVEMVRIEKPEDSWDALEDMTQNAEAILEELGLPYRRVILCTGDIGFSASKTYDLEVWLPSYDNYKEISSCSNCTDFQARRANIRFKRDAASKPELAHTLNGSGLAVGRTFAAIVENYQNADGSITIPEALVPFMGGKTEIRPVND.

Residue 231 to 233 (TAE) participates in L-serine binding. 262-264 (RSE) contributes to the ATP binding site. L-serine is bound at residue glutamate 285. 349 to 352 (EISS) contacts ATP. Position 385 (serine 385) interacts with L-serine.

The protein belongs to the class-II aminoacyl-tRNA synthetase family. Type-1 seryl-tRNA synthetase subfamily. As to quaternary structure, homodimer. The tRNA molecule binds across the dimer.

Its subcellular location is the cytoplasm. It catalyses the reaction tRNA(Ser) + L-serine + ATP = L-seryl-tRNA(Ser) + AMP + diphosphate + H(+). The enzyme catalyses tRNA(Sec) + L-serine + ATP = L-seryl-tRNA(Sec) + AMP + diphosphate + H(+). The protein operates within aminoacyl-tRNA biosynthesis; selenocysteinyl-tRNA(Sec) biosynthesis; L-seryl-tRNA(Sec) from L-serine and tRNA(Sec): step 1/1. Functionally, catalyzes the attachment of serine to tRNA(Ser). Is also able to aminoacylate tRNA(Sec) with serine, to form the misacylated tRNA L-seryl-tRNA(Sec), which will be further converted into selenocysteinyl-tRNA(Sec). The protein is Serine--tRNA ligase of Staphylococcus haemolyticus (strain JCSC1435).